The primary structure comprises 438 residues: Serine hydroxymethyltransferase (438 aa).

(6S)-5,6,7,8-tetrahydrofolate contacts are provided by residues leucine 119 and 123–125 (GHL). Lysine 228 is subject to N6-(pyridoxal phosphate)lysine. Residue 370 to 372 (SPF) participates in (6S)-5,6,7,8-tetrahydrofolate binding.

Belongs to the SHMT family. Homodimer. Requires pyridoxal 5'-phosphate as cofactor.

The protein localises to the cytoplasm. It carries out the reaction (6R)-5,10-methylene-5,6,7,8-tetrahydrofolate + glycine + H2O = (6S)-5,6,7,8-tetrahydrofolate + L-serine. It participates in one-carbon metabolism; tetrahydrofolate interconversion. The protein operates within amino-acid biosynthesis; glycine biosynthesis; glycine from L-serine: step 1/1. In terms of biological role, catalyzes the reversible interconversion of serine and glycine with tetrahydrofolate (THF) serving as the one-carbon carrier. This reaction serves as the major source of one-carbon groups required for the biosynthesis of purines, thymidylate, methionine, and other important biomolecules. Also exhibits THF-independent aldolase activity toward beta-hydroxyamino acids, producing glycine and aldehydes, via a retro-aldol mechanism. In Chlorobium chlorochromatii (strain CaD3), this protein is Serine hydroxymethyltransferase.